The chain runs to 359 residues: Biotin synthase (359 aa).

One can recognise a Radical SAM core domain in the interval 47–276; that stretch reads HHGRRVRIHV…EADLRMAGGR (230 aa). Positions 65, 69, and 72 each coordinate [4Fe-4S] cluster. Cys109, Cys141, Cys201, and Arg271 together coordinate [2Fe-2S] cluster. Residues 320–359 form a disordered region; it reads EPVIVEDGPERQTPATADDTPSGDPEAADRRRQPSAGPAG.

This sequence belongs to the radical SAM superfamily. Biotin synthase family. In terms of assembly, homodimer. [4Fe-4S] cluster serves as cofactor. [2Fe-2S] cluster is required as a cofactor.

It catalyses the reaction (4R,5S)-dethiobiotin + (sulfur carrier)-SH + 2 reduced [2Fe-2S]-[ferredoxin] + 2 S-adenosyl-L-methionine = (sulfur carrier)-H + biotin + 2 5'-deoxyadenosine + 2 L-methionine + 2 oxidized [2Fe-2S]-[ferredoxin]. Its pathway is cofactor biosynthesis; biotin biosynthesis; biotin from 7,8-diaminononanoate: step 2/2. In terms of biological role, catalyzes the conversion of dethiobiotin (DTB) to biotin by the insertion of a sulfur atom into dethiobiotin via a radical-based mechanism. The protein is Biotin synthase of Salinibacter ruber (strain DSM 13855 / M31).